We begin with the raw amino-acid sequence, 464 residues long: Gamma-aminobutyric acid receptor subunit rho-3 (464 aa).

The N-terminal stretch at 1–15 (MVLAFWLAFFTYTWI) is a signal peptide. The Extracellular segment spans residues 16 to 263 (TLMLDASAVK…LFINFVLRRH (248 aa)). Position 108 (Arg108) interacts with 4-aminobutanoate. Asn123 carries an N-linked (GlcNAc...) asparagine glycan. 4-aminobutanoate is bound at residue Ser172. A disulfide bridge connects residues Cys181 and Cys195. A glycan (N-linked (GlcNAc...) asparagine) is linked at Asn194. Glu200 contacts 4-aminobutanoate. A helical membrane pass occupies residues 264–284 (IFFFVLQTYFPAMLMVMLSWV). Residues 285-296 (SFWIDRRAVPAR) lie on the Cytoplasmic side of the membrane. Residues 297–317 (VSLGITTVLTMSTIVTGVSAS) form a helical membrane-spanning segment. Residues 318–328 (MPQVSYVKAVD) lie on the Extracellular side of the membrane. A helical transmembrane segment spans residues 329–349 (VYMWVSSLFVFLSVIEYAAVN). The interval 344-445 (EYAAVNYLTT…NNHVIDTYSR (102 aa)) is interaction with SQSTM1. At 350-443 (YLTTVEEWKQ…LENNHVIDTY (94 aa)) the chain is on the cytoplasmic side. The helical transmembrane segment at 444–464 (SRIVFPVVYIIFNLFYWGIYV) threads the bilayer.

The protein belongs to the ligand-gated ion channel (TC 1.A.9) family. Gamma-aminobutyric acid receptor (TC 1.A.9.5) subfamily. GABRR3 sub-subfamily. Three rho subunits (rho-1/GBRR1, rho-2/GBRR2 and rho-3/GBRR3) coassemble either to form functional homopentamers or heteropentamers. Forms a ternary complex with SQSTM1 and PRKCZ. As to expression, expressed in retina.

The protein localises to the postsynaptic cell membrane. It is found in the cell membrane. It catalyses the reaction chloride(in) = chloride(out). Activated by agonists in the following the potency order: muscimol &gt; TACP &gt; TACA &gt; thiomuscimol &gt; CAMP &gt; CACA, when forming a homopentamer. Inhibited by TPMPA, a rho-specific antagonist, when forming a homopentamer. Inhibited antagonists in the following the potency order: TAMP = TPMPA &gt; P4MPA = THIP &gt; 14AA &gt; 3-APA, when forming a homopentamer. In terms of biological role, rho subunit of the pentameric ligand-gated chloride channels responsible for mediating the effects of gamma-aminobutyric acid (GABA), the major inhibitory neurotransmitter in the brain. Rho-containing GABA-gated chloride channels are a subclass of GABA(A) receptors (GABAARs) entirely composed of rho subunits, where GABA molecules bind at the rho intersubunit interfaces. When activated by GABA, rho-GABAARs selectively allow the flow of chloride anions across the cell membrane down their electrochemical gradient. This chain is Gamma-aminobutyric acid receptor subunit rho-3, found in Rattus norvegicus (Rat).